A 201-amino-acid polypeptide reads, in one-letter code: Dephospho-CoA kinase (201 aa).

Residues 4 to 201 (VIGLTGGIAS…LLDTWSNIEK (198 aa)) form the DPCK domain. 12–17 (ASGKST) serves as a coordination point for ATP.

It belongs to the CoaE family.

Its subcellular location is the cytoplasm. It carries out the reaction 3'-dephospho-CoA + ATP = ADP + CoA + H(+). The protein operates within cofactor biosynthesis; coenzyme A biosynthesis; CoA from (R)-pantothenate: step 5/5. Catalyzes the phosphorylation of the 3'-hydroxyl group of dephosphocoenzyme A to form coenzyme A. This chain is Dephospho-CoA kinase, found in Bacillus licheniformis (strain ATCC 14580 / DSM 13 / JCM 2505 / CCUG 7422 / NBRC 12200 / NCIMB 9375 / NCTC 10341 / NRRL NRS-1264 / Gibson 46).